The sequence spans 64 residues: OPG024 protein (64 aa).

Residues 1–64 form a disordered region; that stretch reads MSSKGGSSGG…GGVKSGTGKI (64 aa). Residues 23-34 are compositionally biased toward low complexity; sequence NKGSKTYTSSGS. A compositionally biased stretch (gly residues) spans 49–64; it reads VNGGVNGGVKSGTGKI.

Belongs to the orthopoxvirus OPG024 family.

The polypeptide is OPG024 protein (OPG023) (Cynomys gunnisoni (Gunnison's prairie dog)).